A 241-amino-acid chain; its full sequence is Adenylate kinase 3 (241 aa).

Position 38–43 (38–43 (GCGKGT)) interacts with ATP. Residues 58–87 (ATGDMLRAAVAAKTPLGIKAKEAMDKGELV) are NMP. AMP contacts are provided by residues Thr-59, Arg-64, 85–87 (ELV), 113–116 (GFPR), and Gln-120. The segment at 154–191 (GRWIHPSSGRSYHTKFAPPKTPGLDDVTGEPLIQRKDD) is LID. ATP is bound at residue Arg-155. Residues Arg-188 and Arg-199 each coordinate AMP.

This sequence belongs to the adenylate kinase family.

The protein localises to the cytoplasm. The catalysed reaction is AMP + ATP = 2 ADP. Catalyzes the reversible transfer of the terminal phosphate group between ATP and AMP. Plays an important role in cellular energy homeostasis and in adenine nucleotide metabolism. The protein is Adenylate kinase 3 (ADK-A) of Oryza sativa subsp. japonica (Rice).